The sequence spans 336 residues: Potassium channel subfamily K member 1 (336 aa).

Topologically, residues 1–20 (MLQSLAGSSCVRLVERHRSA) are cytoplasmic. The chain crosses the membrane as a helical span at residues 21–41 (WCFGFLVLGYLLYLVFGAVVF). Residues 42-103 (SSVELPYEDL…SNASGNWNWD (62 aa)) are Extracellular-facing. N-linked (GlcNAc...) asparagine glycosylation is present at N95. The helical intramembrane region spans 104–116 (FTSALFFASTVLS). The stretch at 117-122 (TTGYGH) is an intramembrane region. The segment at 117–122 (TTGYGH) is selectivity filter 1. Residues 123–132 (TVPLSDGGKA) are Extracellular-facing. The helical transmembrane segment at 133–156 (FCIIYSVIGIPFTLLFLTAVVQRI) threads the bilayer. The Cytoplasmic portion of the chain corresponds to 157–181 (TVHVTRRPVLYFHIRWGFSKQVVAI). Residues 182-202 (VHAVLLGFVTVSCFFFIPAAV) form a helical membrane-spanning segment. Residues 203-211 (FSVLEDDWN) are Extracellular-facing. Positions 212–224 (FLESFYFCFISLS) form an intramembrane region, helical. Positions 225–230 (TIGLGD) are selectivity filter 2. Residues 225 to 231 (TIGLGDY) lie within the membrane without spanning it. Residues 232-243 (VPGEGYNQKFRE) lie on the Extracellular side of the membrane. A helical transmembrane segment spans residues 244–267 (LYKIGITCYLLLGLIAMLVVLETF). At 268 to 336 (CELHELKKFR…SACVDGPANH (69 aa)) the chain is on the cytoplasmic side. K274 is covalently cross-linked (Glycyl lysine isopeptide (Lys-Gly) (interchain with G-Cter in SUMO)). Residues 293–299 (IIEHDQL) are important for intracellular retention in recycling endosomes. Residue S326 is modified to Phosphoserine.

This sequence belongs to the two pore domain potassium channel (TC 1.A.1.8) family. As to quaternary structure, homodimer; disulfide-linked. Heterodimer with KCNK2; disulfide-linked. In astrocytes, forms mostly heterodimeric potassium channels with KCNK2, with only a minor proportion of functional channels containing homodimeric KCNK1. Interacts with KCNK3 and KCNK9, forming functional heterodimeric channels. Interacts with GNG4. Identified in a complex with PSD and ARF6; interacts only with PSD that is bound to ARF6. Interacts with UBE2I. Post-translationally, sumoylation is controversial. Sumoylated by UBE2I. Not sumoylated when expressed in xenopus oocytes or mammalian cells. Sumoylation inactivates the channel, but does not interfere with expression at the cell membrane. Sumoylation of a single subunit is sufficient to silence the dimeric channel. Sumoylation of KCNK1 is sufficient to silence heterodimeric channels formed by KCNK1 and KCNK3 or KCNK9. Desumoylated by SENP1; this activates the channel. Desumoylated by SENP1; this strongly increases halothane-mediated activation of heterodimeric channels formed with KCNK9. SENP1 treatment has no effect. In terms of tissue distribution, detected in bronchial epithelial cells. Detected in heart left atrium and left ventricle. Detected in cardiac myocytes (at protein level). Widely expressed with high levels in heart, brain and kidney, and lower levels in colon, ovary, placenta, lung and liver. Highly expressed in cerebellum, and detected at lower levels in amygdala, caudate nucleus, brain cortex, hippocampus, putamen, substantia nigra, thalamus, dorsal root ganglion, spinal cord, pituitary, heart, kidney, lung, placenta, pancreas, stomach, small intestine, uterus and prostate. Detected in right and left heart ventricle and atrium, and in heart Purkinje fibers.

The protein resides in the cell membrane. Its subcellular location is the recycling endosome. It is found in the synaptic cell membrane. It localises to the cytoplasmic vesicle. The protein localises to the perikaryon. The protein resides in the cell projection. Its subcellular location is the dendrite. It is found in the apical cell membrane. It catalyses the reaction K(+)(in) = K(+)(out). It carries out the reaction NH4(+)(in) = NH4(+)(out). The enzyme catalyses Na(+)(in) = Na(+)(out). The catalysed reaction is Rb(+)(in) = Rb(+)(out). It catalyses the reaction Cs(+)(in) = Cs(+)(out). It carries out the reaction Li(+)(in) = Li(+)(out). The enzyme catalyses L-glutamate(out) = L-glutamate(in). The catalysed reaction is chloride(in) = chloride(out). Inhibited by Ba(2+) ions and quinidine. Inhibited by quinine. Is slightly inhibited by 10 mM tetraethylammonium (TEA), and only marginally inhibited by 4-aminopyridine, charybdotoxin and dendrotoxin. Lowering the extracellular pH to below 6.5 transiently activates the channel, and then inhibits channel activity. Inhibited when the intracellular pH is decreased down to pH 6.0, but this may be due to indirect effects. Ion channel that contributes to passive transmembrane potassium transport and to the regulation of the resting membrane potential in brain astrocytes, but also in kidney and in other tissues. Forms dimeric channels through which potassium ions pass in accordance with their electrochemical gradient. The channel is selective for K(+) ions at physiological potassium concentrations and at neutral pH, but becomes permeable to Na(+) at subphysiological K(+) levels and upon acidification of the extracellular medium. The homodimer has very low potassium channel activity, when expressed in heterologous systems, and can function as weakly inward rectifying potassium channel. Channel activity is modulated by activation of serotonin receptors. Heterodimeric channels containing KCNK1 and KCNK2 have much higher activity, and may represent the predominant form in astrocytes. Heterodimeric channels containing KCNK1 and KCNK3 or KCNK9 have much higher activity. Heterodimeric channels formed by KCNK1 and KCNK9 may contribute to halothane-sensitive currents. Mediates outward rectifying potassium currents in dentate gyrus granule cells and contributes to the regulation of their resting membrane potential. Contributes to the regulation of action potential firing in dentate gyrus granule cells and down-regulates their intrinsic excitability. In astrocytes, the heterodimer formed by KCNK1 and KCNK2 is required for rapid glutamate release in response to activation of G-protein coupled receptors, such as F2R and CNR1. Required for normal ion and water transport in the kidney. Contributes to the regulation of the resting membrane potential of pancreatic beta cells. The low channel activity of homodimeric KCNK1 may be due to sumoylation. The low channel activity may be due to rapid internalization from the cell membrane and retention in recycling endosomes. Permeable to monovalent cations with ion selectivity for K(+) &gt; Rb(+) &gt;&gt; NH4(+) &gt;&gt; Cs(+) = Na(+) = Li(+). The chain is Potassium channel subfamily K member 1 (KCNK1) from Homo sapiens (Human).